Consider the following 55-residue polypeptide: Large ribosomal subunit protein bL33 (55 aa).

Belongs to the bacterial ribosomal protein bL33 family.

The protein is Large ribosomal subunit protein bL33 of Bartonella bacilliformis (strain ATCC 35685 / KC583 / Herrer 020/F12,63).